Consider the following 363-residue polypeptide: Sulfate/thiosulfate import ATP-binding protein CysA (363 aa).

The region spanning 3 to 237 is the ABC transporter domain; sequence IEINNISKYF…PATRFVLEFL (235 aa). 35–42 contacts ATP; it reads GPSGSGKT.

The protein belongs to the ABC transporter superfamily. Sulfate/tungstate importer (TC 3.A.1.6) family. The complex is composed of two ATP-binding proteins (CysA), two transmembrane proteins (CysT and CysW) and a solute-binding protein (CysP).

It is found in the cell inner membrane. It catalyses the reaction sulfate(out) + ATP + H2O = sulfate(in) + ADP + phosphate + H(+). The catalysed reaction is thiosulfate(out) + ATP + H2O = thiosulfate(in) + ADP + phosphate + H(+). Its function is as follows. Part of the ABC transporter complex CysAWTP involved in sulfate/thiosulfate import. Responsible for energy coupling to the transport system. The protein is Sulfate/thiosulfate import ATP-binding protein CysA of Yersinia pseudotuberculosis serotype I (strain IP32953).